Reading from the N-terminus, the 1106-residue chain is Probable ATP-citrate synthase (1106 aa).

Residues Asn358, Thr360, and Arg391 each coordinate citrate. Over residues 442-459 (APQTTGQFLLSPERNTGG) the composition is skewed to polar residues. A disordered region spans residues 442 to 478 (APQTTGQFLLSPERNTGGTERAPPSPAANATPTEHPL). ATP contacts are provided by residues 701–721 (VIRY…EVGG) and 752–778 (ITSE…KNAA). Glu718 contributes to the Mg(2+) binding site. The active-site Tele-phosphohistidine intermediate is His760. Position 779 to 789 (779 to 789 (LRASGALVPES)) interacts with CoA.

This sequence in the N-terminal section; belongs to the succinate/malate CoA ligase beta subunit family. It in the C-terminal section; belongs to the succinate/malate CoA ligase alpha subunit family. As to quaternary structure, homotetramer.

The protein localises to the cytoplasm. It catalyses the reaction oxaloacetate + acetyl-CoA + ADP + phosphate = citrate + ATP + CoA. Its function is as follows. Catalyzes the cleavage of citrate into oxaloacetate and acetyl-CoA, the latter serving as common substrate in multiple biochemical reactions in protein, carbohydrate and lipid metabolism. In Caenorhabditis elegans, this protein is Probable ATP-citrate synthase.